A 56-amino-acid chain; its full sequence is Large ribosomal subunit protein bL33c (56 aa).

Belongs to the bacterial ribosomal protein bL33 family.

It localises to the plastid. The protein localises to the chloroplast. The sequence is that of Large ribosomal subunit protein bL33c (rpl33) from Guillardia theta (Cryptophyte).